Here is a 118-residue protein sequence, read N- to C-terminus: ATP synthase subunit gamma, chloroplastic (118 aa).

The cysteines at positions 30 and 36 are disulfide-linked.

The protein belongs to the ATPase gamma chain family. As to quaternary structure, F-type ATPases have 2 components, CF(1) - the catalytic core - and CF(0) - the membrane proton channel. CF(1) has five subunits: alpha(3), beta(3), gamma(1), delta(1), epsilon(1). CF(0) has four main subunits: a, b, b' and c.

The protein localises to the plastid. The protein resides in the chloroplast thylakoid membrane. In terms of biological role, produces ATP from ADP in the presence of a proton gradient across the membrane. The gamma chain is believed to be important in regulating ATPase activity and the flow of protons through the CF(0) complex. Functionally, inceptin is a proteolytic fragment produced by insect larvae that previously ingested the protein. This peptide mediate plant perception of herbivory through the induction of volatile, phenylpropanoid and protease inhibitor defenses such as ethylene, jasmonic acid and salicylic acid for example. The chain is ATP synthase subunit gamma, chloroplastic from Vigna unguiculata (Cowpea).